Here is a 104-residue protein sequence, read N- to C-terminus: Complex III assembly factor LYRM7 (104 aa).

The protein belongs to the complex I LYR family. In terms of assembly, interacts with UQCRFS1.

Its subcellular location is the mitochondrion matrix. Functionally, assembly factor required for Rieske Fe-S protein UQCRFS1 incorporation into the cytochrome b-c1 (CIII) complex. Functions as a chaperone, binding to this subunit within the mitochondrial matrix and stabilizing it prior to its translocation and insertion into the late CIII dimeric intermediate within the mitochondrial inner membrane. The protein is Complex III assembly factor LYRM7 (lyrm7) of Xenopus tropicalis (Western clawed frog).